Here is a 130-residue protein sequence, read N- to C-terminus: Large ribosomal subunit protein bL17 (130 aa).

The protein belongs to the bacterial ribosomal protein bL17 family. Part of the 50S ribosomal subunit. Contacts protein L32.

The sequence is that of Large ribosomal subunit protein bL17 from Photorhabdus laumondii subsp. laumondii (strain DSM 15139 / CIP 105565 / TT01) (Photorhabdus luminescens subsp. laumondii).